Reading from the N-terminus, the 427-residue chain is BTB/POZ domain-containing protein KCTD16 (427 aa).

The BTB domain maps to 25-98; that stretch reads EVIELNVGGQ…LRDRQVVLPD (74 aa). Y112 bears the Phosphotyrosine mark. A phosphoserine mark is found at S130, S137, S143, and S146.

As to quaternary structure, homopentamer; forms an open pentamer. In contrast to other BTB domain-containing proteins, does not interact with CUL3. Interacts as a tetramer with GABBR1 and GABBR2. Expressed in the brain, mainly in the hippocampus.

The protein localises to the presynaptic cell membrane. The protein resides in the postsynaptic cell membrane. In terms of biological role, auxiliary subunit of GABA-B receptors that determine the pharmacology and kinetics of the receptor response. Increases agonist potency and markedly alter the G-protein signaling of the receptors by accelerating onset and promoting desensitization. This Mus musculus (Mouse) protein is BTB/POZ domain-containing protein KCTD16 (Kctd16).